The primary structure comprises 560 residues: Arginine--tRNA ligase (560 aa).

A 'HIGH' region motif is present at residues 122 to 132 (ANPNGPLHIGH).

Belongs to the class-I aminoacyl-tRNA synthetase family.

The protein resides in the cytoplasm. The catalysed reaction is tRNA(Arg) + L-arginine + ATP = L-arginyl-tRNA(Arg) + AMP + diphosphate. The polypeptide is Arginine--tRNA ligase (argS) (Methanothermobacter thermautotrophicus (strain ATCC 29096 / DSM 1053 / JCM 10044 / NBRC 100330 / Delta H) (Methanobacterium thermoautotrophicum)).